A 354-amino-acid chain; its full sequence is Kelch domain-containing protein 8B (354 aa).

Kelch repeat units lie at residues 1–31 (MSAG…HQDG), 32–79 (HLLV…VLGK), 81–127 (VLVV…ERDG), 128–175 (MVYA…LHGN), 176–222 (KIYV…MAEG), 224–281 (VFSL…SLGG), 282–329 (HIVA…QAGP), and 331–354 (LFVI…RDGV).

The protein resides in the cytoplasm. Its subcellular location is the midbody. Involved in pinching off the separated nuclei at the cleavage furrow and in cytokinesis. Required for mitotic integrity and maintenance of chromosomal stability. Protects cells against mitotic errors, centrosomal amplification, micronucleus formation and aneuploidy. Plays a key role of midbody function involving abscission of the daughter cells during cytokinesis and appropriate chromosomal and nuclear segregation into the daughter cells. This is Kelch domain-containing protein 8B from Homo sapiens (Human).